The following is a 339-amino-acid chain: Zinc metalloprotease MJ0392 (339 aa).

2 helical membrane-spanning segments follow: residues 10–30 (IMGIPIELHITFILFLVVIIG) and 33–53 (IMNNSIFWAVLFILLFVSVVL). Position 54 (histidine 54) interacts with Zn(2+). Residue glutamate 55 is part of the active site. Histidine 58 contributes to the Zn(2+) binding site. Transmembrane regions (helical) follow at residues 96 to 116 (IAGPLVSFIIGIVLLIVSQFF) and 125 to 145 (LLYTLSLLNLMLGGFNLIPAF). Zn(2+) is bound at residue aspartate 148. 2 helical membrane-spanning segments follow: residues 180–200 (IMLLFGLLSMNIILILVSLFV) and 251–271 (YFGYPVVENGKLVGCIGIGNI). CBS domains lie at 226–281 (MTPN…VRDY) and 281–335 (YMEK…ELKE).

It belongs to the peptidase M50B family. In terms of assembly, monomer. It depends on Zn(2+) as a cofactor.

It localises to the cell membrane. With respect to regulation, inhibited by 1,10-phenanthroline. Its function is as follows. A site-2 regulated intramembrane protease (S2P) that cleaves type-2 transmembrane proteins within their membrane-spanning domains; its endogenous substrate is unknown. Regulated intramembrane proteolysis (RIP) occurs when an extracytoplasmic signal triggers a concerted proteolytic cascade to transmit information and elicit cellular responses. A membrane-spanning regulatory substrate protein is first cut extracytoplasmically (site-1 protease, S1P), then within the membrane itself (site-2 protease, S2P, this enzyme), while cytoplasmic proteases finish degrading the regulatory protein, liberating the effector protein. Possible signals, S1P and substrates are unknown in this organism. This Methanocaldococcus jannaschii (strain ATCC 43067 / DSM 2661 / JAL-1 / JCM 10045 / NBRC 100440) (Methanococcus jannaschii) protein is Zinc metalloprotease MJ0392.